Here is a 62-residue protein sequence, read N- to C-terminus: Defensin BmKDfsin5 (62 aa).

Positions 1–24 are cleaved as a signal peptide; the sequence is MKVIALFFLFAFIFCTLEVAIVEA. Disulfide bonds link cysteine 28–cysteine 49, cysteine 35–cysteine 57, and cysteine 39–cysteine 59.

It belongs to the invertebrate defensin family. Type 2 subfamily. Highly expressed in non-venom gland (hemolymph) and moderately expressed in venom gland.

It localises to the secreted. In terms of biological role, antibacterial peptide active against Gram-positive bacteria (including S.aureus ATCC25923 (MIC=2.5 uM), M.luteus AB93113 (MIC=2.5 uM), and the antibiotic-resistant S.epidermidis PRSE P1389 (MIC=1.25 uM)), but not against Gram-negative bacteria (including E.coli and P.aeruginosa). Also has weak blocking activity on Kv1.1/KCNA1 (8.7% inhibition), Kv1.2/KCNA2 (10.2% inhibition), Kv1.3/KCNA3 (9.0% inhibition), KCa3.1/KCNN4/IK (9.1% inhibition), KCa2.3/KCNN3/SK3 (46.3% inhibition) and Kv11.1/KCNH2/ERG1 (16.9% inhibition) channels (tested at 1 uM). It inhibits potassium channel current by interacting with the pore region. In Olivierus martensii (Manchurian scorpion), this protein is Defensin BmKDfsin5.